A 244-amino-acid chain; its full sequence is tRNA (guanine-N(1)-)-methyltransferase (244 aa).

S-adenosyl-L-methionine contacts are provided by residues glycine 113 and isoleucine 133–leucine 138.

It belongs to the RNA methyltransferase TrmD family. In terms of assembly, homodimer.

It localises to the cytoplasm. The catalysed reaction is guanosine(37) in tRNA + S-adenosyl-L-methionine = N(1)-methylguanosine(37) in tRNA + S-adenosyl-L-homocysteine + H(+). Specifically methylates guanosine-37 in various tRNAs. In Bacillus anthracis (strain A0248), this protein is tRNA (guanine-N(1)-)-methyltransferase.